A 719-amino-acid polypeptide reads, in one-letter code: Pesticidal crystal protein Cry1Ib (719 aa).

The protein belongs to the delta endotoxin family.

Promotes colloidosmotic lysis by binding to the midgut epithelial cells of certain coleopteran and lepidopteran species. Active on Plutella xylostella but not on Bombyx mori. This chain is Pesticidal crystal protein Cry1Ib (cry1Ib), found in Bacillus thuringiensis subsp. entomocidus.